The following is a 238-amino-acid chain: Ribonuclease PH (238 aa).

Phosphate is bound by residues Arg-86 and 124-126; that span reads GTR.

It belongs to the RNase PH family. In terms of assembly, homohexameric ring arranged as a trimer of dimers.

The catalysed reaction is tRNA(n+1) + phosphate = tRNA(n) + a ribonucleoside 5'-diphosphate. Its function is as follows. Phosphorolytic 3'-5' exoribonuclease that plays an important role in tRNA 3'-end maturation. Removes nucleotide residues following the 3'-CCA terminus of tRNAs; can also add nucleotides to the ends of RNA molecules by using nucleoside diphosphates as substrates, but this may not be physiologically important. Probably plays a role in initiation of 16S rRNA degradation (leading to ribosome degradation) during starvation. The chain is Ribonuclease PH from Shigella dysenteriae serotype 1 (strain Sd197).